The primary structure comprises 424 residues: MSNYYYYYGGGRYDWLKTVEPTNFLKIGLPYQAHPLHLQHQATTPPSILEKFKRADILLNEVKAEMDPLMLQPETEKKLFQILSSIDMFKGLRKKVEFTYNAQIVTNAWLKMYELLNTMNFNNTSQAFCNCELPGGFISAINHFNYTMMHYPTFNWVASSLYPSSETDALEDHYGLYQCNPDNWLMQSPLLKKNMDYNNGDVTIASNVKNLALRATQRLTPIHLYTADGGINVGHDYNKQEELNLKLHFGQALTGLLSLSKGGNMILKHYTLNHAFTLSLICVFSHFFEELYITKPTSSRPTNSETYIVGKNRLRLFTPKEEQVLLKRLEFFNDTPLVDLSLYQNLLESVYFAVETIHLKQQIEFLNFGMKCYRHFYNKIKLLNDYLAPKKKIFQDRWRVLNKLYVLEKKHKLKLCAASQGSVA.

The Adrift-type SAM-dependent 2'-O-MTase domain maps to 103–315 (QIVTNAWLKM…TYIVGKNRLR (213 aa)). 2 residues coordinate S-adenosyl-L-methionine: Gly-135 and Asp-228. The Proton acceptor role is filled by Lys-268.

It is found in the virion. This Ornithodoros (relapsing fever ticks) protein is Probable methyltransferase EP424R.